Consider the following 249-residue polypeptide: Triosephosphate isomerase (249 aa).

9 to 11 provides a ligand contact to substrate; sequence NWK. Histidine 94 acts as the Electrophile in catalysis. Glutamate 166 acts as the Proton acceptor in catalysis. Residues glycine 172 and 232-233 each bind substrate; that span reads GG.

This sequence belongs to the triosephosphate isomerase family. As to quaternary structure, homodimer.

The protein localises to the cytoplasm. It carries out the reaction D-glyceraldehyde 3-phosphate = dihydroxyacetone phosphate. It participates in carbohydrate biosynthesis; gluconeogenesis. It functions in the pathway carbohydrate degradation; glycolysis; D-glyceraldehyde 3-phosphate from glycerone phosphate: step 1/1. Functionally, involved in the gluconeogenesis. Catalyzes stereospecifically the conversion of dihydroxyacetone phosphate (DHAP) to D-glyceraldehyde-3-phosphate (G3P). The protein is Triosephosphate isomerase of Xylella fastidiosa (strain M12).